We begin with the raw amino-acid sequence, 599 residues long: Elongation factor 4 (599 aa).

One can recognise a tr-type G domain in the interval 2 to 184 (KNIRNFSIIA…EIVAKIPAPK (183 aa)). Residues 14–19 (DHGKST) and 131–134 (NKID) contribute to the GTP site.

It belongs to the TRAFAC class translation factor GTPase superfamily. Classic translation factor GTPase family. LepA subfamily.

It localises to the cell inner membrane. The catalysed reaction is GTP + H2O = GDP + phosphate + H(+). In terms of biological role, required for accurate and efficient protein synthesis under certain stress conditions. May act as a fidelity factor of the translation reaction, by catalyzing a one-codon backward translocation of tRNAs on improperly translocated ribosomes. Back-translocation proceeds from a post-translocation (POST) complex to a pre-translocation (PRE) complex, thus giving elongation factor G a second chance to translocate the tRNAs correctly. Binds to ribosomes in a GTP-dependent manner. The sequence is that of Elongation factor 4 from Mannheimia succiniciproducens (strain KCTC 0769BP / MBEL55E).